A 185-amino-acid chain; its full sequence is uncharacterized protein (185 aa).

A run of 3 helical transmembrane segments spans residues 32 to 52 (LIFVPDSPTATFFFLFVLLAF), 66 to 86 (LVTLVKYGLWAVAMNFLVLAV), and 155 to 175 (IGYGTFWLSIFSIALAYFLVV).

Its subcellular location is the cell membrane. This is an uncharacterized protein from Bacillus subtilis (strain 168).